Consider the following 339-residue polypeptide: Small ribosomal subunit protein mS27 (339 aa).

The N-terminal 37 residues, 1–37, are a transit peptide targeting the mitochondrion; the sequence is MGTITVVINEGPILLIRALHRATTNKKMFRSTVWRRF.

The protein belongs to the mitochondrion-specific ribosomal protein mS27 family. Component of the mitochondrial small ribosomal subunit (mt-SSU). Mature yeast 74S mitochondrial ribosomes consist of a small (37S) and a large (54S) subunit. The 37S small subunit contains a 15S ribosomal RNA (15S mt-rRNA) and 34 different proteins. The 54S large subunit contains a 21S rRNA (21S mt-rRNA) and 46 different proteins.

It localises to the mitochondrion. In terms of biological role, component of the mitochondrial ribosome (mitoribosome), a dedicated translation machinery responsible for the synthesis of mitochondrial genome-encoded proteins, including at least some of the essential transmembrane subunits of the mitochondrial respiratory chain. The mitoribosomes are attached to the mitochondrial inner membrane and translation products are cotranslationally integrated into the membrane. The chain is Small ribosomal subunit protein mS27 (MRP13) from Saccharomyces cerevisiae (strain ATCC 204508 / S288c) (Baker's yeast).